The sequence spans 405 residues: MPSAIPRGLLLLAGLCCLVFGIMAEDAQVAQGPSQQIPRSLAHFAHSMYRVLTQQSNTSNIFFSPVSIATALAMVSVGAKGDTHTQILRGLEFNLTEIAEADIHNGFQNLLHTLNRPHSEHQLTTGNGLFLDQKLKLKEKFSEDVKTLYHAEAFPTNFSNPKEAEKQINAYVEKGTQGKIVDLVKDLSADTVLALVNYIFFRGKWEKPFDVKHTTQEDFHVDTSTTVKVPMMKREGKYKAFHCSTIQSWVLLLDYEGNVTALFLLPEEGKMQHLEETLTPELIFKFARKTERMFANVHLPKLSISGTYDLKEVLGHLGITNVFSDAADLSGVTEDIPLKISKGLHKALLTIDEKGTEAAGATMMEFMPMSLPEDLSFNKPFLFLIIDHSTDTPLFVGKVMDPTKK.

An N-terminal signal peptide occupies residues 1–24 (MPSAIPRGLLLLAGLCCLVFGIMA). 4 N-linked (GlcNAc...) asparagine glycosylation sites follow: asparagine 57, asparagine 94, asparagine 157, and asparagine 258. The RCL stretch occupies residues 360–379 (GATMMEFMPMSLPEDLSFNK).

The protein belongs to the serpin family.

The protein resides in the secreted. Its function is as follows. Inhibits elastase, chymotrypsin, cathepsin G, plasmin, and trypsin. The polypeptide is Alpha-1-antiproteinase S (Cavia porcellus (Guinea pig)).